Reading from the N-terminus, the 66-residue chain is Large ribosomal subunit protein uL29 (66 aa).

It belongs to the universal ribosomal protein uL29 family.

The chain is Large ribosomal subunit protein uL29 from Thermosipho melanesiensis (strain DSM 12029 / CIP 104789 / BI429).